Reading from the N-terminus, the 205-residue chain is E3 ubiquitin-protein ligase complex slx8-rfp subunit rfp2 (205 aa).

The RING-type; degenerate zinc finger occupies 147–190; it reads CAKCGNELVSDEKKSIFAAKCGHLFCSTCAKELRKKTVPCPVQH.

Part of an E3 ubiquitin complex including rfp1, rfp2 and slx8. Interacts with slx8.

It is found in the nucleus. The enzyme catalyses S-ubiquitinyl-[E2 ubiquitin-conjugating enzyme]-L-cysteine + [acceptor protein]-L-lysine = [E2 ubiquitin-conjugating enzyme]-L-cysteine + N(6)-ubiquitinyl-[acceptor protein]-L-lysine.. Its pathway is protein modification; protein ubiquitination. Mediates ubiquitination and subsequent desumoylation/degradation of sumoylated proteins and proteins containing SUMO-like domains. Involved in maintaining genome stability where it acts in the cellular response to DNA damage. The protein is E3 ubiquitin-protein ligase complex slx8-rfp subunit rfp2 (rfp2) of Schizosaccharomyces pombe (strain 972 / ATCC 24843) (Fission yeast).